The chain runs to 200 residues: 3-isopropylmalate dehydratase small subunit (200 aa).

It belongs to the LeuD family. LeuD type 1 subfamily. Heterodimer of LeuC and LeuD.

The catalysed reaction is (2R,3S)-3-isopropylmalate = (2S)-2-isopropylmalate. Its pathway is amino-acid biosynthesis; L-leucine biosynthesis; L-leucine from 3-methyl-2-oxobutanoate: step 2/4. Its function is as follows. Catalyzes the isomerization between 2-isopropylmalate and 3-isopropylmalate, via the formation of 2-isopropylmaleate. This Histophilus somni (strain 129Pt) (Haemophilus somnus) protein is 3-isopropylmalate dehydratase small subunit.